The chain runs to 454 residues: B-cell lymphoma 3 protein (454 aa).

Residues 1-50 (MPRCPAGAMDEGPVDLRTRPKAAGLPGAALPLRKRPLRAPSPEPAAPRGA) form a disordered region. The segment covering 21–31 (KAAGLPGAALP) has biased composition (low complexity). At Ser-41 the chain carries Phosphoserine. ANK repeat units lie at residues 134–163 (DGDT…QGGR), 171–200 (LRQT…SPMA), 204–235 (HGQT…TLDL), 241–270 (DGLT…DIDA), 275–304 (SGRS…NVNA), 308–337 (SGSS…DSSL), and 338–367 (KNCH…RPAS). The segment at 360-454 (GKATRPASTS…VPPSPAPGGS (95 aa)) is disordered. Residues 365–381 (PASTSQPDPSPDRSANT) are compositionally biased toward polar residues. Ser-374 is subject to Phosphoserine. Residues 382–404 (SPESSSRLSSNGLLSASPSSSPS) are compositionally biased toward low complexity. Phosphoserine; by GSK3 occurs at positions 402 and 406. A compositionally biased stretch (pro residues) spans 405–418 (QSPPRDPPGFPMAP). Residues 432 to 442 (LPFAGVLRGPG) are compositionally biased toward low complexity. The span at 443-454 (RPVPPSPAPGGS) shows a compositional bias: pro residues.

As to quaternary structure, component of a complex consisting of the NF-kappa-B p52-p52 homodimer and BCL3. Component of a complex consisting of the NF-kappa-B p50-p50 homodimer and BCL3. Interacts with N4BP2, COPS5 and PIR. Interacts with CYLD. In terms of processing, polyubiquitinated. Ubiquitination via 'Lys-63'-linked ubiquitin chains is required for nuclear accumulation. Deubiquitinated by CYLD, which acts on 'Lys-63'-linked ubiquitin chains. Deubiquitination by CYLD prevents nuclear accumulation. Activated by phosphorylation.

The protein resides in the nucleus. It is found in the cytoplasm. The protein localises to the perinuclear region. Its function is as follows. Contributes to the regulation of transcriptional activation of NF-kappa-B target genes. In the cytoplasm, inhibits the nuclear translocation of the NF-kappa-B p50 subunit. In the nucleus, acts as transcriptional activator that promotes transcription of NF-kappa-B target genes. Contributes to the regulation of cell proliferation. This is B-cell lymphoma 3 protein (BCL3) from Homo sapiens (Human).